The sequence spans 883 residues: Pyruvate, phosphate dikinase 2 (883 aa).

Residues 1–21 (MAPAPCGRSSQRVFHFGKGKS) form a disordered region. Histidine 465 acts as the Tele-phosphohistidine intermediate in catalysis. Substrate-binding residues include arginine 571, arginine 628, glutamate 757, glycine 778, threonine 779, asparagine 780, and aspartate 781. Glutamate 757 is a Mg(2+) binding site. Aspartate 781 is a Mg(2+) binding site. Cysteine 843 serves as the catalytic Proton donor.

This sequence belongs to the PEP-utilizing enzyme family. Requires Mg(2+) as cofactor. Expressed in leaves, roots and stems.

The protein localises to the cytoplasm. It carries out the reaction pyruvate + phosphate + ATP = phosphoenolpyruvate + AMP + diphosphate + H(+). Its function is as follows. Formation of phosphoenolpyruvate, which is the primary acceptor of CO(2) in C4 and some Crassulacean acid metabolism plants. This chain is Pyruvate, phosphate dikinase 2, found in Zea mays (Maize).